The chain runs to 194 residues: Putative manganese efflux pump MntP (194 aa).

The next 6 membrane-spanning stretches (helical) occupy residues 8-28 (LLAI…GIIL), 36-56 (MLIM…LGWL), 61-81 (FSHL…AFLG), 109-129 (MAVA…FLGI), 138-158 (PAGI…IFGI), and 172-192 (LWGG…HLFF).

This sequence belongs to the MntP (TC 9.B.29) family.

The protein resides in the cell inner membrane. Its function is as follows. Probably functions as a manganese efflux pump. The polypeptide is Putative manganese efflux pump MntP (Bacteroides fragilis (strain ATCC 25285 / DSM 2151 / CCUG 4856 / JCM 11019 / LMG 10263 / NCTC 9343 / Onslow / VPI 2553 / EN-2)).